A 331-amino-acid chain; its full sequence is Dioxygenase swnH2 (331 aa).

Residues 1–11 (MINSDAQSAQK) show a composition bias toward polar residues. The tract at residues 1-31 (MINSDAQSAQKQVEVEKPDEKYSAPRLLPPI) is disordered. Basic and acidic residues predominate over residues 13–23 (VEVEKPDEKYS). The Fe cation site is built by histidine 173, aspartate 175, and histidine 250.

Belongs to the PhyH family. Homodimer. Requires Fe cation as cofactor.

It participates in mycotoxin biosynthesis. In terms of biological role, dioxygenase; part of the gene cluster that mediates the biosynthesis of swainsonine (SW), a cytotoxic fungal alkaloid and a potential cancer therapy drug. Swainsonine production occurs via a multibranched pathway and is dispensable for fungal colonization of plants and infection of insect hosts. The first step of swainsonine biosynthesis is the production of the precursor pipecolic acid (PA) via conversion of L-lysine (Lys) to 1-piperideine-6-carboxylate (P6C) by the aminotransferase swnA, the latter being further reduced to PA by the reductase swnR. PA can be converted from lysine by both the SW biosynthetic cluster and the unclustered genes such as lysine cyclodeaminase. The PKS-NRPS hybrid synthetase swnK uptakes and condensates PA and malonyl-CoA with and without skipping of the ketoreductase (KR) domain in order to produce 3 intermediates, 1-oxoindolizidine, (1S)-1-hydroxyindolizin, and (1R)-1-hydroxyindolizine; with the transisomer (1S)-1-hydroxyindolizin being predominant. The terminal thioester reductase (TE) domain of swnK is involved in reduction of the thioester bond to release the intermediate aldehydes. The oxidoreductase swnN could contribute to the reduction of 1-oxoindolizidine to (1S)-1-hydroxyindolizin and (1R)-1-hydroxyindolizine, contributing to the major route of SW production. The dioxygenase swnH2 would be responsible for the oxidization of (1R)-1-hydroxyindolizine into (1R,2S)-1,2-dihydroxyindolizine and of (1S)-1-hydroxyindolizin to yield both (1R,2S)-1,2-dihydroxyindolizine and (1S,2S)-1,2-dihydroxyindolizine. The dioxygenase swnH1 then performs the conversion of the 1,2-dihydroxyindolizine epimers to SW. The chain is Dioxygenase swnH2 from Metarhizium robertsii (strain ARSEF 23 / ATCC MYA-3075) (Metarhizium anisopliae (strain ARSEF 23)).